The following is a 340-amino-acid chain: Probable protein phosphatase 2C 21 (340 aa).

Residues 1-21 (MGASPSRPLEQSPSSSEGENH) are disordered. The PPM-type phosphatase domain maps to 24–305 (KYASYTTQGF…DNATAILVKF (282 aa)). Positions 58, 59, 254, and 296 each coordinate Mn(2+). Positions 311–340 (DPDEVASARDEHQHNPEGGDEKLDINNDND) are disordered. A compositionally biased stretch (basic and acidic residues) spans 316–340 (ASARDEHQHNPEGGDEKLDINNDND).

The protein belongs to the PP2C family. Mg(2+) serves as cofactor. Requires Mn(2+) as cofactor.

The catalysed reaction is O-phospho-L-seryl-[protein] + H2O = L-seryl-[protein] + phosphate. The enzyme catalyses O-phospho-L-threonyl-[protein] + H2O = L-threonyl-[protein] + phosphate. The sequence is that of Probable protein phosphatase 2C 21 from Oryza sativa subsp. japonica (Rice).